We begin with the raw amino-acid sequence, 461 residues long: tRNA modification GTPase MnmE (461 aa).

The (6S)-5-formyl-5,6,7,8-tetrahydrofolate site is built by Arg-27, Glu-89, and Arg-128. In terms of domain architecture, TrmE-type G spans 224–382; it reads GLKTAIVGRP…LEALIKKLFF (159 aa). Asn-234 is a binding site for K(+). GTP is bound by residues 234–239, 253–259, and 278–281; these read NVGKSS, TDVAGTT, and DTAG. Mg(2+) is bound at residue Ser-238. Residues Thr-253, Val-255, and Thr-258 each contribute to the K(+) site. Residue Thr-259 coordinates Mg(2+). Lys-461 serves as a coordination point for (6S)-5-formyl-5,6,7,8-tetrahydrofolate.

The protein belongs to the TRAFAC class TrmE-Era-EngA-EngB-Septin-like GTPase superfamily. TrmE GTPase family. As to quaternary structure, homodimer. Heterotetramer of two MnmE and two MnmG subunits. It depends on K(+) as a cofactor.

It localises to the cytoplasm. Functionally, exhibits a very high intrinsic GTPase hydrolysis rate. Involved in the addition of a carboxymethylaminomethyl (cmnm) group at the wobble position (U34) of certain tRNAs, forming tRNA-cmnm(5)s(2)U34. This Lactobacillus delbrueckii subsp. bulgaricus (strain ATCC BAA-365 / Lb-18) protein is tRNA modification GTPase MnmE.